A 459-amino-acid polypeptide reads, in one-letter code: ATP synthase subunit beta (459 aa).

Residue 147-154 coordinates ATP; it reads GGAGVGKT.

It belongs to the ATPase alpha/beta chains family. F-type ATPases have 2 components, CF(1) - the catalytic core - and CF(0) - the membrane proton channel. CF(1) has five subunits: alpha(3), beta(3), gamma(1), delta(1), epsilon(1). CF(0) has three main subunits: a(1), b(2) and c(9-12). The alpha and beta chains form an alternating ring which encloses part of the gamma chain. CF(1) is attached to CF(0) by a central stalk formed by the gamma and epsilon chains, while a peripheral stalk is formed by the delta and b chains.

The protein resides in the cell inner membrane. It catalyses the reaction ATP + H2O + 4 H(+)(in) = ADP + phosphate + 5 H(+)(out). In terms of biological role, produces ATP from ADP in the presence of a proton gradient across the membrane. The catalytic sites are hosted primarily by the beta subunits. The chain is ATP synthase subunit beta from Hydrogenovibrio crunogenus (strain DSM 25203 / XCL-2) (Thiomicrospira crunogena).